The primary structure comprises 200 residues: Serine/arginine-rich splicing factor RSZ23 (200 aa).

In terms of domain architecture, RRM spans 2 to 71; the sequence is ARVYVGNLDP…NGWRVELSTK (70 aa). The CCHC-type zinc-finger motif lies at 86 to 103; sequence MKCYECGEPGHFARECRL. The disordered stretch occupies residues 105-200; the sequence is IGSGGLGSGR…REESPYANNA (96 aa). The segment covering 113 to 139 has biased composition (basic residues); sequence GRRRSRSRSRSPRYRGRSRSRSPRYRR.

The protein belongs to the splicing factor SR family. In terms of processing, extensively phosphorylated on serine residues in the RS domain. Expressed in roots, leaves and immature seeds.

Its subcellular location is the nucleus. Involved in pre-mRNA splicing. In protoplast assay, enhances splicing efficiency of WAXY intron 1 and alters the selection of the 5'-splice sites by stimulating site 1 (proximal site). This chain is Serine/arginine-rich splicing factor RSZ23 (RSZ23), found in Oryza sativa subsp. japonica (Rice).